Consider the following 467-residue polypeptide: Acetaldehyde dehydrogenase (acetylating) EutE (467 aa).

Belongs to the EutE/PduP family. Interacts with EutS, which targets it to the interior of the BMC. Has a very strong preference for NAD(+) over NADP(+). is required as a cofactor.

The protein resides in the bacterial microcompartment. The catalysed reaction is acetaldehyde + NAD(+) + CoA = acetyl-CoA + NADH + H(+). The protein operates within amine and polyamine degradation; ethanolamine degradation. Its function is as follows. Acts as the second step in ethanolamine degradation by converting acetaldehyde into acetyl-CoA. May play a role in bacterial microcompartment (BMC) assembly or maintenance. Directly targeted to the BMC. Its heterologous expression in S.cerevisiae increases the level of acetylating acetaldehyde dehydrogenase activity. This is Acetaldehyde dehydrogenase (acetylating) EutE (eutE) from Escherichia coli (strain K12).